A 677-amino-acid polypeptide reads, in one-letter code: Heat shock transcription factor (677 aa).

Disordered stretches follow at residues 1 to 56 (MGHN…DDSN) and 115 to 164 (STSS…SQQP). 2 stretches are compositionally biased toward polar residues: residues 115–131 (STSSAAKLSDGDLTNAT) and 143–164 (QPSSESQSHSNGYHKQGQSQQP). A DNA-binding region spans residues 193–297 (ARPAFVNKLW…EYLLENIVRQ (105 aa)). Residues 320-373 (ELETVKYNQLAIAEDLKRITKDNEMLWKENMMARERHQSQQQVLEKLLRFLSSV) form an involved in trimerization region. 2 stretches are compositionally biased toward low complexity: residues 400–416 (NHMSNNNHNNTGNINPN) and 457–501 (RSMS…QGQQ). 3 disordered regions span residues 400-444 (NHMS…VPLQ), 457-541 (RSMS…NQYS), and 606-677 (KLNP…RRAA). The segment at 466–677 (NLNQRQSPQN…NNGQKRRRAA (212 aa)) is activatory. Composition is skewed to polar residues over residues 502–541 (FSYPIQGGNQMMNQLGSPIGTQVGSPVGSQYGNQYGNQYS) and 629–641 (FANTGGSGQSEQP). Positions 650–669 (EELRNSRLHEPDRSFEEKNN) are enriched in basic and acidic residues.

It belongs to the HSF family. Homotrimer. Homotrimerization increases the affinity of HSF1 to DNA. Exhibits temperature-dependent phosphorylation.

Its subcellular location is the nucleus. DNA-binding transcription factor that specifically binds heat shock promoter elements (HSE) and activates transcription. In Kluyveromyces lactis (strain ATCC 8585 / CBS 2359 / DSM 70799 / NBRC 1267 / NRRL Y-1140 / WM37) (Yeast), this protein is Heat shock transcription factor.